Here is a 541-residue protein sequence, read N- to C-terminus: Tegument protein UL21 homolog (541 aa).

This sequence belongs to the alphaherpesvirinae UL21 protein family. Interacts (via C-terminus) with UL16.

Its subcellular location is the virion tegument. It localises to the host cytoplasm. The protein resides in the host nucleus. May participate in DNA packaging/capsid maturation events. Promotes efficient incorporation of tegument proteins UL46, UL49, and US3 homologs into virions. May also play a role in capsid transport to the trans-Golgi network (TGN). The polypeptide is Tegument protein UL21 homolog (Varicella-zoster virus (strain Oka vaccine) (HHV-3)).